We begin with the raw amino-acid sequence, 126 residues long: Large ribosomal subunit protein bL21 (126 aa).

Residues 105–126 (KKPSVGPRAKRTKAAPAAEAAE) form a disordered region.

Contacts protein L20. Part of the 50S ribosomal subunit.

Its function is as follows. This protein binds to 23S rRNA in the presence of protein L20. In Rhodopseudomonas palustris (strain ATCC BAA-98 / CGA009), this protein is Large ribosomal subunit protein bL21.